The primary structure comprises 556 residues: Potassium-transporting ATPase potassium-binding subunit (556 aa).

10 helical membrane passes run 6–26 (AGLIFLAVLVAALVVVHVPLG), 65–85 (GVLAFSSVSIIFLFVLQLVQG), 133–153 (GLAVQNFVSAAVGMAVAVALV), 176–196 (LRILLPISIVGAVLLVAGGAI), 249–269 (PTAWTNWLEIFLILVIGFSLP), 283–303 (YAIASVMASLYLLSTGFMLWF), 378–398 (GLYGMLVLAVITVFVAGLMVG), 419–439 (YFLVTPLIVLTGTAIAMALPG), 483–503 (ALGLAMAFGRFLPIVLVLALA), and 526–546 (FVGMVAGVTLIVVALTFLPML).

It belongs to the KdpA family. The system is composed of three essential subunits: KdpA, KdpB and KdpC.

Its subcellular location is the cell membrane. Its function is as follows. Part of the high-affinity ATP-driven potassium transport (or Kdp) system, which catalyzes the hydrolysis of ATP coupled with the electrogenic transport of potassium into the cytoplasm. This subunit binds the extracellular potassium ions and delivers the ions to the membrane domain of KdpB through an intramembrane tunnel. The sequence is that of Potassium-transporting ATPase potassium-binding subunit from Mycobacterium avium (strain 104).